The chain runs to 506 residues: Transforming growth factor beta-1-induced transcript 1 protein (506 aa).

The short motif at 3 to 15 is the LD motif 1 element; that stretch reads DLDALLADLQITT. The tract at residues 15-62 is disordered; sequence TPPRCPVLLTDSPEKPQPTETRPPPPPYDPKTAMSNKTSDHETFPVDK. The span at 52–62 shows a compositional bias: basic and acidic residues; sequence TSDHETFPVDK. Short sequence motifs (LD motif) lie at residues 87–99 and 139–150; these read ELDR…NATQ and ELDRLMASLSDF. 2 disordered regions span residues 154 to 201 and 221 to 244; these read NTVS…PTPK and SDEV…ATSV. Residues 168–177 show a composition bias toward basic and acidic residues; it reads GSEEVSRPGD. Positions 248 to 260 match the LD motif 4 motif; sequence DLDSMLVKLQSGL. 4 consecutive LIM zinc-binding domains span residues 271–330, 331–388, 389–448, and 449–506; these read GLCE…LYAP, RCAL…RLFG, AVCA…RRGS, and LCAG…RLYG.

Belongs to the paxillin family. In terms of assembly, interacts with tcf3 and tcf7l2.

The protein localises to the cell junction. It localises to the focal adhesion. The protein resides in the nucleus matrix. Its subcellular location is the cytoplasm. It is found in the cytoskeleton. Functions as a molecular adapter coordinating multiple protein-protein interactions at the focal adhesion complex and in the nucleus. May regulate both Wnt and steroid signaling pathways and play a role in the processes of cell growth, proliferation, migration, differentiation and senescence. May have a zinc-dependent DNA-binding activity. This is Transforming growth factor beta-1-induced transcript 1 protein (tgfb1i1) from Xenopus laevis (African clawed frog).